We begin with the raw amino-acid sequence, 368 residues long: Protein ALTERED XYLOGLUCAN 9 (368 aa).

The Cytoplasmic portion of the chain corresponds to 1 to 32 (MLGAIHLGVLAACFVLFVPMAMAGWHLSRNKM). A helical membrane pass occupies residues 33 to 53 (LFFSGALFISLAVCVHLTPYF). The Lumenal segment spans residues 54 to 368 (PSVSDIVASV…ALLIESHQSL (315 aa)). N-linked (GlcNAc...) asparagine glycans are attached at residues Asn-99, Asn-137, and Asn-235.

The protein localises to the golgi apparatus membrane. Functionally, component of the plant cell wall polysaccharide acetylation pathway. Does not directly catalyze O-acetylation of xyloglucan but exhibits weak acetylesterase activity in vitro. The chain is Protein ALTERED XYLOGLUCAN 9 from Arabidopsis thaliana (Mouse-ear cress).